A 539-amino-acid chain; its full sequence is O-phosphoserine--tRNA(Cys) ligase (539 aa).

Substrate is bound by residues 188 to 190 (HMT), 233 to 235 (SAS), 275 to 276 (YY), and asparagine 327.

It belongs to the class-II aminoacyl-tRNA synthetase family. O-phosphoseryl-tRNA(Cys) synthetase subfamily. Homotetramer. Interacts with SepCysS.

The catalysed reaction is tRNA(Cys) + O-phospho-L-serine + ATP = O-phospho-L-seryl-tRNA(Cys) + AMP + diphosphate. Catalyzes the attachment of O-phosphoserine (Sep) to tRNA(Cys). The protein is O-phosphoserine--tRNA(Cys) ligase of Methanococcoides burtonii (strain DSM 6242 / NBRC 107633 / OCM 468 / ACE-M).